Consider the following 80-residue polypeptide: Exodeoxyribonuclease 7 small subunit (80 aa).

Belongs to the XseB family. As to quaternary structure, heterooligomer composed of large and small subunits.

The protein localises to the cytoplasm. It catalyses the reaction Exonucleolytic cleavage in either 5'- to 3'- or 3'- to 5'-direction to yield nucleoside 5'-phosphates.. Its function is as follows. Bidirectionally degrades single-stranded DNA into large acid-insoluble oligonucleotides, which are then degraded further into small acid-soluble oligonucleotides. This chain is Exodeoxyribonuclease 7 small subunit, found in Pseudomonas fluorescens (strain ATCC BAA-477 / NRRL B-23932 / Pf-5).